The chain runs to 140 residues: 3-hydroxyacyl-[acyl-carrier-protein] dehydratase FabZ (140 aa).

His-47 is a catalytic residue.

Belongs to the thioester dehydratase family. FabZ subfamily.

It localises to the cytoplasm. The enzyme catalyses a (3R)-hydroxyacyl-[ACP] = a (2E)-enoyl-[ACP] + H2O. In terms of biological role, involved in unsaturated fatty acids biosynthesis. Catalyzes the dehydration of short chain beta-hydroxyacyl-ACPs and long chain saturated and unsaturated beta-hydroxyacyl-ACPs. In Streptococcus pneumoniae (strain CGSP14), this protein is 3-hydroxyacyl-[acyl-carrier-protein] dehydratase FabZ.